Reading from the N-terminus, the 296-residue chain is Sulfotransferase 1B1 (296 aa).

48–53 contributes to the 3'-phosphoadenylyl sulfate binding site; the sequence is KSGTTW. 107–109 contributes to the substrate binding site; that stretch reads KTH. The active-site Proton acceptor is the His-109. 3'-phosphoadenylyl sulfate contacts are provided by residues Arg-131, Ser-139, Tyr-194, 228–233, and 258–260; these read TSFEMM and RKG.

Belongs to the sulfotransferase 1 family. As to expression, expressed highly in the colon, kidney and small intestine of male and female dogs. Highly expressed in the jejunum and ileum of the male dog than the female dog, which displayed more expression in duodenum (at protein level).

It is found in the cytoplasm. The enzyme catalyses a phenol + 3'-phosphoadenylyl sulfate = an aryl sulfate + adenosine 3',5'-bisphosphate + H(+). It carries out the reaction 3,3',5-triiodo-L-thyronine + 3'-phosphoadenylyl sulfate = 3,3',5-triiodo-L-thyronine sulfate + adenosine 3',5'-bisphosphate + H(+). It catalyses the reaction 3,3',5'-triiodo-L-thyronine + 3'-phosphoadenylyl sulfate = 3,3',5'-triiodo-L-thyronine sulfate + adenosine 3',5'-bisphosphate + H(+). The catalysed reaction is 3,3'-diiodo-L-thyronine + 3'-phosphoadenylyl sulfate = 3,3'-diiodo-L-thyronine sulfate + adenosine 3',5'-bisphosphate + H(+). The enzyme catalyses 4-ethylphenol + 3'-phosphoadenylyl sulfate = 4-ethylphenyl sulfate + adenosine 3',5'-bisphosphate + H(+). Sulfotransferase that utilizes 3'-phospho-5'-adenylyl sulfate (PAPS) as sulfonate donor to catalyze the sulfate conjugation of dopamine, small phenols such as 1-naphthol and p-nitrophenol and thyroid hormones, including 3,3'-diiodothyronine, triidothyronine (T3) and reverse triiodothyronine (rT3). May play a role in gut microbiota-host metabolic interaction. O-sulfonates 4-ethylphenol (4-EP), a dietary tyrosine-derived metabolite produced by gut bacteria. The product 4-EPS crosses the blood-brain barrier and may negatively regulate oligodendrocyte maturation and myelination, affecting the functional connectivity of different brain regions associated with the limbic system. This Canis lupus familiaris (Dog) protein is Sulfotransferase 1B1 (SULT1B1).